The sequence spans 215 residues: Outer membrane protein assembly factor BamC homolog (215 aa).

The signal sequence occupies residues methionine 1 to glycine 16. Residue cysteine 17 is the site of N-palmitoyl cysteine attachment. A lipid anchor (S-diacylglycerol cysteine) is attached at cysteine 17.

This sequence belongs to the BamC family.

The protein localises to the cell outer membrane. This is Outer membrane protein assembly factor BamC homolog from Haemophilus influenzae (strain ATCC 51907 / DSM 11121 / KW20 / Rd).